Consider the following 125-residue polypeptide: Large ribosomal subunit protein bL12 (125 aa).

The protein belongs to the bacterial ribosomal protein bL12 family. Homodimer. Part of the ribosomal stalk of the 50S ribosomal subunit. Forms a multimeric L10(L12)X complex, where L10 forms an elongated spine to which 2 to 4 L12 dimers bind in a sequential fashion. Binds GTP-bound translation factors.

In terms of biological role, forms part of the ribosomal stalk which helps the ribosome interact with GTP-bound translation factors. Is thus essential for accurate translation. This is Large ribosomal subunit protein bL12 from Chlorobium phaeobacteroides (strain DSM 266 / SMG 266 / 2430).